We begin with the raw amino-acid sequence, 877 residues long: Translation initiation factor IF-2 (877 aa).

The tract at residues 48 to 289 (SSFQNSAPAE…QITKRKERPL (242 aa)) is disordered. Basic and acidic residues predominate over residues 78–89 (RKNEKKPEENNT). Basic residues predominate over residues 92-101 (KSNRRRNNKR). A compositionally biased stretch (basic and acidic residues) spans 102 to 116 (RSSDRARDNKERDAK). The span at 123-132 (KAAALLQQFK) shows a compositional bias: low complexity. 2 stretches are compositionally biased toward basic and acidic residues: residues 135 to 155 (QRAE…EYHE) and 162 to 189 (KEQS…EKKV). Residues 277 to 286 (PRKQITKRKE) are compositionally biased toward basic residues. A tr-type G domain is found at 378–547 (KRPPVVTIMG…LLQADVMELK (170 aa)). The interval 387–394 (GHVDHGKT) is G1. 387–394 (GHVDHGKT) contacts GTP. Positions 412 to 416 (GITQR) are G2. A G3 region spans residues 433-436 (DTPG). Residues 433–437 (DTPGH) and 487–490 (NKMD) each bind GTP. A G4 region spans residues 487 to 490 (NKMD). Residues 523–525 (SAK) are G5.

The protein belongs to the TRAFAC class translation factor GTPase superfamily. Classic translation factor GTPase family. IF-2 subfamily.

The protein localises to the cytoplasm. Its function is as follows. One of the essential components for the initiation of protein synthesis. Protects formylmethionyl-tRNA from spontaneous hydrolysis and promotes its binding to the 30S ribosomal subunits. Also involved in the hydrolysis of GTP during the formation of the 70S ribosomal complex. This Lactobacillus acidophilus (strain ATCC 700396 / NCK56 / N2 / NCFM) protein is Translation initiation factor IF-2.